We begin with the raw amino-acid sequence, 167 residues long: UPF0178 protein bll3966 (167 aa).

The protein belongs to the UPF0178 family.

This Bradyrhizobium diazoefficiens (strain JCM 10833 / BCRC 13528 / IAM 13628 / NBRC 14792 / USDA 110) protein is UPF0178 protein bll3966.